The sequence spans 210 residues: MVESVVKNWQGEQIGQKTFELRVAKETTAAHIVHRALVRQQTNARQGTASTKTRAEVRGGGRKPWRQKGTGRARAGSIRSPLWRGGGVIFGPKPRDFDLKMNRKERRLALRTAFVSRIDDLILVEEFSNELSRPKTKDLVAAFTRWGAEPESKILLILSEFPENVYLSARNIENLKLIAADQLNVYDLLHADKIVVTTSALEKIQEVYNG.

The span at 41 to 52 (QTNARQGTASTK) shows a compositional bias: polar residues. A disordered region spans residues 41 to 71 (QTNARQGTASTKTRAEVRGGGRKPWRQKGTG). A compositionally biased stretch (basic residues) spans 60–71 (GGRKPWRQKGTG).

This sequence belongs to the universal ribosomal protein uL4 family. In terms of assembly, part of the 50S ribosomal subunit.

One of the primary rRNA binding proteins, this protein initially binds near the 5'-end of the 23S rRNA. It is important during the early stages of 50S assembly. It makes multiple contacts with different domains of the 23S rRNA in the assembled 50S subunit and ribosome. In terms of biological role, forms part of the polypeptide exit tunnel. The chain is Large ribosomal subunit protein uL4 from Nostoc sp. (strain PCC 7120 / SAG 25.82 / UTEX 2576).